A 78-amino-acid polypeptide reads, in one-letter code: Putative defensin-like protein 133 (78 aa).

A signal peptide spans 1-24 (MKRSFLLLLTILTIFIILGQGVMG). 4 disulfide bridges follow: Cys34/Cys75, Cys44/Cys68, Cys49/Cys72, and Cys53/Cys74.

Belongs to the DEFL family.

The protein resides in the secreted. In Arabidopsis thaliana (Mouse-ear cress), this protein is Putative defensin-like protein 133 (LCR33).